A 314-amino-acid polypeptide reads, in one-letter code: UPF0761 membrane protein VIBHAR_00593 (314 aa).

Helical transmembrane passes span Tyr41–Leu61, Met104–Asp124, Phe143–Val163, Phe185–Val205, Ile217–Ile237, and Ala249–Ile269.

The protein belongs to the UPF0761 family.

It is found in the cell inner membrane. The sequence is that of UPF0761 membrane protein VIBHAR_00593 from Vibrio campbellii (strain ATCC BAA-1116).